Reading from the N-terminus, the 178-residue chain is Translation initiation factor IF-3 (178 aa).

Belongs to the IF-3 family. As to quaternary structure, monomer.

It localises to the cytoplasm. Functionally, IF-3 binds to the 30S ribosomal subunit and shifts the equilibrium between 70S ribosomes and their 50S and 30S subunits in favor of the free subunits, thus enhancing the availability of 30S subunits on which protein synthesis initiation begins. In Macrococcus caseolyticus (strain JCSC5402) (Macrococcoides caseolyticum), this protein is Translation initiation factor IF-3.